The following is a 456-amino-acid chain: UDP-N-acetylglucosamine 1-carboxyvinyltransferase (456 aa).

34–35 is a phosphoenolpyruvate binding site; the sequence is KN. Arg-104 lines the UDP-N-acetyl-alpha-D-glucosamine pocket. Residue Cys-128 is the Proton donor of the active site. Cys-128 carries the post-translational modification 2-(S-cysteinyl)pyruvic acid O-phosphothioketal. The UDP-N-acetyl-alpha-D-glucosamine site is built by Asp-319 and Ile-341.

Belongs to the EPSP synthase family. MurA subfamily.

The protein resides in the cytoplasm. The catalysed reaction is phosphoenolpyruvate + UDP-N-acetyl-alpha-D-glucosamine = UDP-N-acetyl-3-O-(1-carboxyvinyl)-alpha-D-glucosamine + phosphate. Its pathway is cell wall biogenesis; peptidoglycan biosynthesis. Cell wall formation. Adds enolpyruvyl to UDP-N-acetylglucosamine. The polypeptide is UDP-N-acetylglucosamine 1-carboxyvinyltransferase (Prochlorococcus marinus (strain MIT 9301)).